An 83-amino-acid chain; its full sequence is Neurotoxin LmNaTx10 (83 aa).

A signal peptide spans Met-1 to Cys-19. Positions Lys-21–His-80 constitute an LCN-type CS-alpha/beta domain. Intrachain disulfides connect Cys-31-Cys-79, Cys-35-Cys-55, Cys-41-Cys-62, and Cys-45-Cys-64.

It belongs to the long (4 C-C) scorpion toxin superfamily. Sodium channel inhibitor family. Alpha subfamily. In terms of tissue distribution, expressed by the venom gland.

Its subcellular location is the secreted. In terms of biological role, binds voltage-independently at site-3 of voltage-gated sodium channels (Nav) and inhibits the inactivation of the activated channels, thereby blocking neuronal transmission. In Lychas mucronatus (Chinese swimming scorpion), this protein is Neurotoxin LmNaTx10.